Reading from the N-terminus, the 321-residue chain is MNSTDIIANVTKPFVENLTLGETAFYISCGIVGTVFNALVLWIALTYINTEDKPRQIIVINMTVADLLMCIVYMKTRPWLSHFNLWLCHPYYVIIWTCQMCSCLNLVWLNVDKLIYIQFPLHYYQIVNRKRLLWITAATWGGLYAMNIALVTFLKITRGSCLGVSLNPYVYLLSPIFYVVMILTSFSLSALIYCIAHNLTHMEERQRSKLFRRLFFLFSSTLWTFFTCLPYRLLYLFSIFCGETCQINNYYKTATNLFFRLLIVGIMINPVITIWTQRIYRLRLMRMFGRLRENSSTEVLMVSNRRASERPPEHTPLRCDM.

Residues 1 to 24 (MNSTDIIANVTKPFVENLTLGETA) lie on the Extracellular side of the membrane. N-linked (GlcNAc...) asparagine glycans are attached at residues asparagine 2, asparagine 9, and asparagine 17. The chain crosses the membrane as a helical span at residues 25 to 45 (FYISCGIVGTVFNALVLWIAL). At 46–55 (TYINTEDKPR) the chain is on the cytoplasmic side. Residues 56–76 (QIIVINMTVADLLMCIVYMKT) form a helical membrane-spanning segment. Residues 77–90 (RPWLSHFNLWLCHP) lie on the Extracellular side of the membrane. Cysteine 88 and cysteine 161 are disulfide-bonded. A helical transmembrane segment spans residues 91 to 111 (YYVIIWTCQMCSCLNLVWLNV). Topologically, residues 112 to 132 (DKLIYIQFPLHYYQIVNRKRL) are cytoplasmic. A helical membrane pass occupies residues 133-153 (LWITAATWGGLYAMNIALVTF). The Extracellular segment spans residues 154–175 (LKITRGSCLGVSLNPYVYLLSP). The chain crosses the membrane as a helical span at residues 176-196 (IFYVVMILTSFSLSALIYCIA). Residues 197-221 (HNLTHMEERQRSKLFRRLFFLFSST) are Cytoplasmic-facing. A helical transmembrane segment spans residues 222–242 (LWTFFTCLPYRLLYLFSIFCG). Residues 243–254 (ETCQINNYYKTA) lie on the Extracellular side of the membrane. A helical membrane pass occupies residues 255-275 (TNLFFRLLIVGIMINPVITIW). Residues 276–321 (TQRIYRLRLMRMFGRLRENSSTEVLMVSNRRASERPPEHTPLRCDM) lie on the Cytoplasmic side of the membrane.

It belongs to the G-protein coupled receptor 1 family. In terms of tissue distribution, expressed in the intestinal muscle, anal depressor, AVL and DVB GABAergic neurons, enteric muscles, the nerve ring, the ventral nerve cord and head mesodermal cells.

It is found in the cell membrane. Its subcellular location is the cell projection. It localises to the cilium. In terms of biological role, G-protein coupled receptor for the nlp-40 neuropeptide. The activity of this receptor is mediated by G proteins which activate adenylyl cyclase. Plays a role in the defecation motor program, which is a coordinated series of three muscle contractions that occurs every 45 seconds. Specifically, acts in GABAergic neurons, such as AVL and DVB, to control the expulsion step of defecation. Required for fatty acid uptake and metabolism by intestinal cells and therefore regulates the levels of triglycerides in the intestine. The protein is G-protein coupled receptor aex-2 of Caenorhabditis elegans.